Reading from the N-terminus, the 183-residue chain is Phosphopantetheine adenylyltransferase (183 aa).

Serine 8 serves as a coordination point for substrate. ATP-binding positions include 8 to 9 (SF) and histidine 16. Residues lysine 40, threonine 72, and arginine 86 each coordinate substrate. ATP contacts are provided by residues 87-89 (GLR), glutamate 97, and 122-128 (YSFLSSS).

This sequence belongs to the bacterial CoaD family. In terms of assembly, homohexamer. The cofactor is Mg(2+).

Its subcellular location is the cytoplasm. It carries out the reaction (R)-4'-phosphopantetheine + ATP + H(+) = 3'-dephospho-CoA + diphosphate. The protein operates within cofactor biosynthesis; coenzyme A biosynthesis; CoA from (R)-pantothenate: step 4/5. Its function is as follows. Reversibly transfers an adenylyl group from ATP to 4'-phosphopantetheine, yielding dephospho-CoA (dPCoA) and pyrophosphate. This chain is Phosphopantetheine adenylyltransferase, found in Nostoc punctiforme (strain ATCC 29133 / PCC 73102).